A 385-amino-acid chain; its full sequence is Leucine aminopeptidase 1 (385 aa).

The N-terminal stretch at 1 to 20 is a signal peptide; the sequence is MKLPSLLSLGVAASTTIVAA. Positions 21-87 are excised as a propeptide; the sequence is VPDQKPIGDT…FPKTFAQTTV (67 aa). An N-linked (GlcNAc...) asparagine glycan is attached at Asn-177. His-185, Asp-204, Glu-243, and Asp-270 together coordinate Zn(2+). Residues Cys-319 and Cys-323 are joined by a disulfide bond. Residue His-352 coordinates Zn(2+).

It belongs to the peptidase M28 family. M28E subfamily. In terms of assembly, monomer. Zn(2+) is required as a cofactor.

The protein localises to the secreted. Functionally, extracellular aminopeptidase that allows assimilation of proteinaceous substrates. In Ajellomyces capsulatus (strain NAm1 / WU24) (Darling's disease fungus), this protein is Leucine aminopeptidase 1 (LAP1).